Here is a 544-residue protein sequence, read N- to C-terminus: 4-coumarate:CoA ligase 1 (544 aa).

This sequence belongs to the ATP-dependent AMP-binding enzyme family. As to quaternary structure, monomer. As to expression, mostly expressed in flower organs, with highest levels in corollas, and, to a lesser extent, in tubes, sepals, pistils, stamen and ovaries. Also present at low levels in leaves.

The protein localises to the cytoplasm. The protein resides in the cytosol. The catalysed reaction is (E)-4-coumarate + ATP + CoA = (E)-4-coumaroyl-CoA + AMP + diphosphate. It catalyses the reaction (E)-caffeate + ATP + CoA = (E)-caffeoyl-CoA + AMP + diphosphate. It carries out the reaction benzoate + ATP + CoA = benzoyl-CoA + AMP + diphosphate. The enzyme catalyses (E)-cinnamate + ATP + CoA = (E)-cinnamoyl-CoA + AMP + diphosphate. The catalysed reaction is (E)-ferulate + ATP + CoA = (E)-feruloyl-CoA + AMP + diphosphate. It participates in phenylpropanoid metabolism; trans-cinnamate biosynthesis. The protein operates within phytoalexin biosynthesis; 3,4',5-trihydroxystilbene biosynthesis; 3,4',5-trihydroxystilbene from trans-4-coumarate: step 1/2. Its function is as follows. Catalyzes the formation of CoA esters of trans-cinnamic acid, 4-coumaric acid, ferulic acid, benzoic acid and caffeic acid. The sequence is that of 4-coumarate:CoA ligase 1 from Petunia hybrida (Petunia).